Consider the following 207-residue polypeptide: FMN-dependent NADH:quinone oxidoreductase 2 (207 aa).

Residues Ser9, 15-17, and 97-100 contribute to the FMN site; these read SAS and MWNF.

This sequence belongs to the azoreductase type 1 family. As to quaternary structure, homodimer. Requires FMN as cofactor.

It carries out the reaction 2 a quinone + NADH + H(+) = 2 a 1,4-benzosemiquinone + NAD(+). The catalysed reaction is N,N-dimethyl-1,4-phenylenediamine + anthranilate + 2 NAD(+) = 2-(4-dimethylaminophenyl)diazenylbenzoate + 2 NADH + 2 H(+). Quinone reductase that provides resistance to thiol-specific stress caused by electrophilic quinones. Functionally, also exhibits azoreductase activity. Catalyzes the reductive cleavage of the azo bond in aromatic azo compounds to the corresponding amines. In Burkholderia lata (strain ATCC 17760 / DSM 23089 / LMG 22485 / NCIMB 9086 / R18194 / 383), this protein is FMN-dependent NADH:quinone oxidoreductase 2.